We begin with the raw amino-acid sequence, 967 residues long: Cytosolic carboxypeptidase 2 (967 aa).

Positions 330–601 (YPYTYSDLQR…HFCDTLLDYC (272 aa)) constitute a Peptidase M14 domain. Zn(2+) is bound by residues His-396, Glu-399, and His-492. Glu-565 acts as the Proton donor/acceptor in catalysis. Disordered regions lie at residues 679–706 (KRRL…LHEA) and 944–967 (PGIS…NTMK). Residues 946–967 (ISSSEPHFPNSSEDITVRNTMK) are compositionally biased toward polar residues.

It belongs to the peptidase M14 family. Requires Zn(2+) as cofactor.

The protein resides in the cytoplasm. It localises to the cytosol. Its subcellular location is the cytoskeleton. It is found in the microtubule organizing center. The protein localises to the centrosome. The protein resides in the centriole. It localises to the cilium basal body. It carries out the reaction (L-glutamyl)(n+1)-gamma-L-glutamyl-L-glutamyl-[protein] + H2O = (L-glutamyl)(n)-gamma-L-glutamyl-L-glutamyl-[protein] + L-glutamate. In terms of biological role, metallocarboxypeptidase that mediates deglutamylation of target proteins. Catalyzes the deglutamylation of polyglutamate side chains generated by post-translational polyglutamylation in proteins such as tubulins. Also removes gene-encoded polyglutamates from the carboxy-terminus of target proteins such as MYLK. Does not show detyrosinase or deglycylase activities from the carboxy-terminus of tubulin. Functionally, metallocarboxypeptidase that mediates deglutamylation of tubulin and non-tubulin target proteins. Catalyzes the removal of polyglutamate side chains present on the gamma-carboxyl group of glutamate residues within the C-terminal tail of tubulin protein. Specifically cleaves tubulin long-side-chains, while it is not able to remove the branching point glutamate. Also catalyzes the removal of polyglutamate residues from the carboxy-terminus of non-tubulin proteins. In Xenopus tropicalis (Western clawed frog), this protein is Cytosolic carboxypeptidase 2 (agbl2).